The following is a 190-amino-acid chain: uncharacterized protein (190 aa).

An N-terminal signal peptide occupies residues 1 to 28; the sequence is MEFSLQYITIFIFVILFLIGLFSSKSRS.

This is an uncharacterized protein from Haemophilus influenzae (strain ATCC 51907 / DSM 11121 / KW20 / Rd).